The sequence spans 486 residues: Cardiolipin synthase A (486 aa).

2 helical membrane-spanning segments follow: residues 3–23 and 38–58; these read TFYTVVSWLVILGYWVLIAGV and MAWLLIIYILPMVGIIAYLSV. PLD phosphodiesterase domains lie at 219–246 and 399–426; these read MDLRQHRKMVMIDNYIAYTGSMNMVDPR and EGGLLHTKSVLVDGELSLVGTVNLDMRS. Catalysis depends on residues His-224, Lys-226, Asp-231, His-404, Lys-406, and Asp-411.

It belongs to the phospholipase D family. Cardiolipin synthase subfamily. ClsA sub-subfamily.

It localises to the cell inner membrane. The enzyme catalyses 2 a 1,2-diacyl-sn-glycero-3-phospho-(1'-sn-glycerol) = a cardiolipin + glycerol. Its function is as follows. Catalyzes the reversible phosphatidyl group transfer from one phosphatidylglycerol molecule to another to form cardiolipin (CL) (diphosphatidylglycerol) and glycerol. This is Cardiolipin synthase A from Salmonella gallinarum (strain 287/91 / NCTC 13346).